The primary structure comprises 105 residues: Large ribosomal subunit protein eL36 (105 aa).

It belongs to the eukaryotic ribosomal protein eL36 family. As to quaternary structure, component of the large ribosomal subunit.

The protein resides in the cytoplasm. The protein localises to the cytosol. In terms of biological role, component of the large ribosomal subunit. The ribosome is a large ribonucleoprotein complex responsible for the synthesis of proteins in the cell. The sequence is that of Large ribosomal subunit protein eL36 (RPL36) from Gallus gallus (Chicken).